The chain runs to 376 residues: Dehydrogenase/reductase SDR family member FEY (376 aa).

The residue at position 2 (Ser-2) is an N-acetylserine. An NAD(+)-binding site is contributed by 61–85; it reads VVTGSTSGIGRETARQLAEAGAHVV. Ser-199 serves as a coordination point for substrate. Tyr-227 (proton acceptor) is an active-site residue.

Belongs to the short-chain dehydrogenases/reductases (SDR) family. In terms of tissue distribution, expressed in roots, stems, leaves and flowers and, at lower levels, in siliques.

Putative oxidoreductase. Required for vegetative shoot apex development, especially during leaf positioning and for shoot apical meristem (SAM) maintenance. The chain is Dehydrogenase/reductase SDR family member FEY from Arabidopsis thaliana (Mouse-ear cress).